Reading from the N-terminus, the 574-residue chain is E3 ubiquitin-protein ligase TRIM23 (574 aa).

An RING-type; degenerate zinc finger spans residues cysteine 31–arginine 76. A B box-type; degenerate zinc finger spans residues glutamate 122–leucine 168. Positions arginine 352 to aspartate 379 form a coiled coil. The ARF-like stretch occupies residues threonine 390–alanine 574. GTP-binding positions include glycine 411–threonine 418, aspartate 454–lysine 458, and asparagine 513–aspartate 516.

This sequence in the C-terminal section; belongs to the small GTPase superfamily. Arf family. Homodimer. Interacts with PSCD1. Interacts with UBE2D2. Interacts with TBK1 (via N-terminal kinase domain) and p62/SQSTM1. In terms of assembly, (Microbial infection) Interacts with human cytomegalovirus protein UL144; this interaction might cause autoubiquitination of TRAF6, leading to NF-kappa-B activation.

It localises to the cytoplasm. Its subcellular location is the endomembrane system. The protein localises to the golgi apparatus membrane. It is found in the lysosome membrane. It catalyses the reaction S-ubiquitinyl-[E2 ubiquitin-conjugating enzyme]-L-cysteine + [acceptor protein]-L-lysine = [E2 ubiquitin-conjugating enzyme]-L-cysteine + N(6)-ubiquitinyl-[acceptor protein]-L-lysine.. Its pathway is protein modification; protein ubiquitination. Its function is as follows. Acts as an E3 ubiquitin-protein ligase. Plays an essential role in autophagy activation during viral infection. Mechanistically, activates TANK-binding kinase 1/TBK1 by facilitating its dimerization and ability to phosphorylate the selective autophagy receptor SQSTM1. In order to achieve this function, TRIM23 mediates 'Lys-27'-linked auto-ubiquitination of its ADP-ribosylation factor (ARF) domain to induce its GTPase activity and its recruitment to autophagosomes. In terms of biological role, (Microbial infection) Mediates TRAF6 auto-ubiquitination in the presence of human cytomegalovirus protein UL144, resulting in the virally controlled activation of NF-kappa-B stimulation at early times of HCMV infection. This Homo sapiens (Human) protein is E3 ubiquitin-protein ligase TRIM23 (TRIM23).